We begin with the raw amino-acid sequence, 263 residues long: Transmembrane protein 176B (263 aa).

4 consecutive transmembrane segments (helical) span residues 61–81, 89–109, 121–141, and 197–217; these read LGVTQILLGLVSCALGVCLYF, AFGCAFWSGSVAILAGVGTIV, VSCLLLLACIATAAAATVLGV, and LFLAFCIMLTVVCILEIVVSV. Phosphoserine occurs at positions 231, 240, and 253. Positions 239–263 are disordered; that stretch reads ESERKLLDGHPAPASPAKEKIPAIL.

Belongs to the TMEM176 family. As to expression, ubiquitously expressed with higher expression in lung, liver, kidney and colon. Expressed in cerebellar granule cells.

Its subcellular location is the nucleus membrane. May play a role in the process of maturation of dendritic cells. Required for the development of cerebellar granule cells. In Mus musculus (Mouse), this protein is Transmembrane protein 176B (Tmem176b).